The primary structure comprises 894 residues: Bifunctional glutamine synthetase adenylyltransferase/adenylyl-removing enzyme (894 aa).

The tract at residues M1 to S410 is adenylyl removase. Positions S415–S894 are adenylyl transferase.

The protein belongs to the GlnE family. Mg(2+) is required as a cofactor.

It catalyses the reaction [glutamine synthetase]-O(4)-(5'-adenylyl)-L-tyrosine + phosphate = [glutamine synthetase]-L-tyrosine + ADP. The enzyme catalyses [glutamine synthetase]-L-tyrosine + ATP = [glutamine synthetase]-O(4)-(5'-adenylyl)-L-tyrosine + diphosphate. In terms of biological role, involved in the regulation of glutamine synthetase GlnA, a key enzyme in the process to assimilate ammonia. When cellular nitrogen levels are high, the C-terminal adenylyl transferase (AT) inactivates GlnA by covalent transfer of an adenylyl group from ATP to specific tyrosine residue of GlnA, thus reducing its activity. Conversely, when nitrogen levels are low, the N-terminal adenylyl removase (AR) activates GlnA by removing the adenylyl group by phosphorolysis, increasing its activity. The regulatory region of GlnE binds the signal transduction protein PII (GlnB) which indicates the nitrogen status of the cell. This is Bifunctional glutamine synthetase adenylyltransferase/adenylyl-removing enzyme from Chromobacterium violaceum (strain ATCC 12472 / DSM 30191 / JCM 1249 / CCUG 213 / NBRC 12614 / NCIMB 9131 / NCTC 9757 / MK).